The sequence spans 156 residues: Rhombotin-1 (156 aa).

LIM zinc-binding domains lie at 22–84 and 86–148; these read KGCA…LFGT and GNCA…GHLN.

Expressed in the brain and not in the thymus.

It localises to the nucleus. Its function is as follows. May be involved in gene regulation within neural lineage cells potentially by direct DNA binding or by binding to other transcription factors. The sequence is that of Rhombotin-1 (Lmo1) from Mus musculus (Mouse).